The chain runs to 448 residues: Asparagine--tRNA ligase (448 aa).

It belongs to the class-II aminoacyl-tRNA synthetase family. Homodimer.

The protein localises to the cytoplasm. It carries out the reaction tRNA(Asn) + L-asparagine + ATP = L-asparaginyl-tRNA(Asn) + AMP + diphosphate + H(+). This chain is Asparagine--tRNA ligase, found in Streptococcus agalactiae serotype Ia (strain ATCC 27591 / A909 / CDC SS700).